A 100-amino-acid polypeptide reads, in one-letter code: UPF0213 protein YhbQ (100 aa).

The 76-residue stretch at 2–77 folds into the GIY-YIG domain; sequence TPWFLYLIRT…KQLTKRQKER (76 aa).

Belongs to the UPF0213 family.

This Escherichia coli (strain K12 / MC4100 / BW2952) protein is UPF0213 protein YhbQ.